Reading from the N-terminus, the 337-residue chain is CMP-N-acetylneuraminate-beta-galactosamide-alpha-2,3-sialyltransferase 1 (337 aa).

The Cytoplasmic portion of the chain corresponds to 1-4; sequence MRRK. A helical; Signal-anchor for type II membrane protein membrane pass occupies residues 5–25; that stretch reads TLKYLTFFLLFIFLTSFVLNY. At 26–337 the chain is on the lumenal side; it reads SNTGVPSAWF…INKIRIFKGR (312 aa). Intrachain disulfides connect C56/C61, C58/C136, and C139/C278. N-linked (GlcNAc...) asparagine glycosylation is present at N76. Q102 lines the substrate pocket. The N-linked (GlcNAc...) asparagine glycan is linked to N109. Substrate contacts are provided by N144, N167, Y227, Y263, G267, G287, H296, and H313. Residue N320 is glycosylated (N-linked (GlcNAc...) asparagine).

This sequence belongs to the glycosyltransferase 29 family. In terms of processing, the soluble form derives from the membrane form by proteolytic processing. Highly expressed in submaxillary gland and to a much lesser extent in liver, lung, kidney, heart and brain.

The protein localises to the golgi apparatus. Its subcellular location is the golgi stack membrane. It is found in the trans-Golgi network membrane. It localises to the secreted. The catalysed reaction is a beta-D-galactosyl-(1-&gt;3)-N-acetyl-alpha-D-galactosaminyl derivative + CMP-N-acetyl-beta-neuraminate = an N-acetyl-alpha-neuraminyl-(2-&gt;3)-beta-D-galactosyl-(1-&gt;3)-N-acetyl-alpha-D-galactosaminyl derivative + CMP + H(+). It carries out the reaction a ganglioside GM1 (d18:1(4E)) + CMP-N-acetyl-beta-neuraminate = a ganglioside GD1a (d18:1(4E)) + CMP + H(+). The enzyme catalyses ganglioside GM1 (d18:1(4E)/18:0) + CMP-N-acetyl-beta-neuraminate = ganglioside GD1a (18:1(4E)/18:0) + CMP + H(+). It catalyses the reaction a ganglioside GA1 + CMP-N-acetyl-beta-neuraminate = a ganglioside GM1b + CMP + H(+). The catalysed reaction is a ganglioside GA1 (d18:1(4E)) + CMP-N-acetyl-beta-neuraminate = a ganglioside GM1b (d18:1(4E)) + CMP + H(+). It carries out the reaction a ganglioside GD1b + CMP-N-acetyl-beta-neuraminate = a ganglioside GT1b + CMP + H(+). The enzyme catalyses a 3-O-[beta-D-galactosyl-(1-&gt;3)-N-acetyl-alpha-D-galactosaminyl]-L-threonyl-[protein] + CMP-N-acetyl-beta-neuraminate = a 3-O-[N-acetyl-alpha-neuraminyl-(2-&gt;3)-beta-D-galactosyl-(1-&gt;3)-N-acetyl-alpha-D-galactosaminyl]-L-threonyl-[protein] + CMP + H(+). It catalyses the reaction a 3-O-[beta-D-galactosyl-(1-&gt;3)-N-acetyl-alpha-D-galactosaminyl]-L-seryl-[protein] + CMP-N-acetyl-beta-neuraminate = 3-O-[N-acetyl-alpha-neuraminyl-(2-&gt;3)-beta-D-galactosyl-(1-&gt;3)-N-acetyl-alpha-D-galactosaminyl]-L-seryl-[protein] + CMP + H(+). It participates in protein modification; protein glycosylation. It functions in the pathway glycolipid biosynthesis. Functionally, a beta-galactoside alpha2-&gt;3 sialyltransferase involved in terminal sialylation of glycoproteins and glycolipids. Catalyzes the transfer of sialic acid (N-acetyl-neuraminic acid; Neu5Ac) from the nucleotide sugar donor CMP-Neu5Ac onto acceptor Galbeta-(1-&gt;3)-GalNAc-terminated glycoconjugates through an alpha2-3 linkage. Adds sialic acid to the core 1 O-glycan, Galbeta-(1-&gt;3)-GalNAc-O-Ser/Thr, which is a major structure of mucin-type O-glycans. As part of a homeostatic mechanism that regulates CD8-positive T cell numbers, sialylates core 1 O-glycans of T cell glycoproteins, SPN/CD43 and PTPRC/CD45. Prevents premature apoptosis of thymic CD8-positive T cells prior to peripheral emigration, whereas in the secondary lymphoid organs controls the survival of CD8-positive memory T cells generated following a successful immune response. Transfers sialic acid to asialofetuin, presumably onto Galbeta-(1-&gt;3)-GalNAc-O-Ser. Sialylates GM1a, GA1 and GD1b gangliosides to form GD1a, GM1b and GT1b, respectively. The chain is CMP-N-acetylneuraminate-beta-galactosamide-alpha-2,3-sialyltransferase 1 (St3gal1) from Mus musculus (Mouse).